The chain runs to 317 residues: Beta-sarcoglycan (317 aa).

Residues 1 to 31 form a disordered region; it reads MAAAAAATEQQSSNGPVKKSMREKAVERRNV. At 1–64 the chain is on the cytoplasmic side; that stretch reads MAAAAAATEQ…GLRGRKGNLA (64 aa). Residues 20-31 are compositionally biased toward basic and acidic residues; the sequence is SMREKAVERRNV. The chain crosses the membrane as a helical; Signal-anchor for type II membrane protein span at residues 65–85; it reads ICVIVLLFILAVINLIITLVI. The Extracellular segment spans residues 86–317; the sequence is WAVIRIGPNG…TSDNPCGDLY (232 aa). Asparagine 157, asparagine 210, and asparagine 257 each carry an N-linked (GlcNAc...) asparagine glycan. 2 cysteine pairs are disulfide-bonded: cysteine 287/cysteine 313 and cysteine 289/cysteine 306.

The protein belongs to the sarcoglycan beta/delta/gamma/zeta family. Cross-link to form 2 major subcomplexes: one consisting of SGCB, SGCD and SGCG and the other consisting of SGCB and SGCD. The association between SGCB and SGCG is particularly strong while SGCA is loosely associated with the other sarcoglycans. Post-translationally, disulfide bonds are present.

The protein localises to the cell membrane. It is found in the sarcolemma. The protein resides in the cytoplasm. Its subcellular location is the cytoskeleton. Component of the sarcoglycan complex, a subcomplex of the dystrophin-glycoprotein complex which forms a link between the F-actin cytoskeleton and the extracellular matrix. In Bos taurus (Bovine), this protein is Beta-sarcoglycan (SGCB).